A 475-amino-acid polypeptide reads, in one-letter code: E3 ubiquitin-protein ligase TRIM62 (475 aa).

The RING-type zinc-finger motif lies at 11–54 (CSICLSIYQDPVSLGCEHYFCRRCITEHWVRQEAQGARDCPECR). The B box-type zinc-finger motif lies at 88–128 (RAARPCQAHDKVKLFCLTDRALLCFFCDEPALHEQHQVTGI). Zn(2+) is bound by residues cysteine 93, histidine 96, cysteine 114, and histidine 120. A coiled-coil region spans residues 127-241 (GIDDAFDELQ…LQERLAETDR (115 aa)). Residues 277 to 475 (PLQYTIWKSL…QPLRINTVRI (199 aa)) enclose the B30.2/SPRY domain.

This sequence belongs to the TRIM/RBCC family. Interacts with the ubiquitin-conjugating enzyme, UBE2D2. In terms of processing, polyubiquitinated, autoubiquitinated in the presence of UBE2D2.

It localises to the cytoplasm. It catalyses the reaction S-ubiquitinyl-[E2 ubiquitin-conjugating enzyme]-L-cysteine + [acceptor protein]-L-lysine = [E2 ubiquitin-conjugating enzyme]-L-cysteine + N(6)-ubiquitinyl-[acceptor protein]-L-lysine.. The protein operates within protein modification; protein ubiquitination. Its function is as follows. E3 ubiquitin ligase that plays a role in antifungal immunity by mediating 'Lys-27'-linked ubiquitination of CARD9 downstream of C-type lectin receptors; leading to CARD9 activation, followed by activation of NF-kappa-B and MAP kinase p38 pathways. E3 ubiquitin ligase activity is dependent on E2 ubiquitin-conjugating enzyme UBE2D2. The sequence is that of E3 ubiquitin-protein ligase TRIM62 from Homo sapiens (Human).